The sequence spans 254 residues: Trans-aconitate 2-methyltransferase (254 aa).

The protein belongs to the methyltransferase superfamily. Tam family.

Its subcellular location is the cytoplasm. It carries out the reaction trans-aconitate + S-adenosyl-L-methionine = (E)-3-(methoxycarbonyl)pent-2-enedioate + S-adenosyl-L-homocysteine. Functionally, catalyzes the S-adenosylmethionine monomethyl esterification of trans-aconitate. This Rhodococcus jostii (strain RHA1) protein is Trans-aconitate 2-methyltransferase.